The chain runs to 782 residues: Cleavage and polyadenylation specificity factor subunit 2 (782 aa).

Residues 407 to 416 (KKLEQSKEAD) show a composition bias toward basic and acidic residues. The disordered stretch occupies residues 407–449 (KKLEQSKEADIDSSDESDVEEDVDQPSAHKTKHDLMMKGEGSR). The segment covering 417-430 (IDSSDESDVEEDVD) has biased composition (acidic residues). 3 positions are modified to phosphoserine: serine 419, serine 420, and serine 423. Residues 439–449 (HDLMMKGEGSR) show a composition bias toward basic and acidic residues. Position 660 is a phosphoserine (serine 660).

Belongs to the metallo-beta-lactamase superfamily. RNA-metabolizing metallo-beta-lactamase-like family. CPSF2/YSH1 subfamily. In terms of assembly, component of the cleavage and polyadenylation specificity factor (CPSF) complex, composed of CPSF1, CPSF2, CPSF3, CPSF4 and FIP1L1. Interacts with CPSF3, CSTF2 and SYMPK. Interacts with ZC3H3.

It is found in the nucleus. In terms of biological role, component of the cleavage and polyadenylation specificity factor (CPSF) complex that play a key role in pre-mRNA 3'-end formation, recognizing the AAUAAA signal sequence and interacting with poly(A) polymerase and other factors to bring about cleavage and poly(A) addition. Involved in the histone 3' end pre-mRNA processing. In Mus musculus (Mouse), this protein is Cleavage and polyadenylation specificity factor subunit 2 (Cpsf2).